The sequence spans 556 residues: (-)-alpha-pinene synthase (556 aa).

Residues Asp309, Asp313, Asp453, and Glu461 each coordinate Mg(2+). The DDXXD motif motif lies at 309–313 (DDMYD).

It belongs to the terpene synthase family. Tpsa subfamily. Mg(2+) serves as cofactor. The cofactor is Mn(2+). As to expression, expressed in ripe fruits and roots. Not detected in vegetative tissues.

Its subcellular location is the cytoplasm. The protein localises to the cytosol. It catalyses the reaction (2E)-geranyl diphosphate = (1S,5S)-alpha-pinene + diphosphate. It functions in the pathway secondary metabolite biosynthesis; terpenoid biosynthesis. Its function is as follows. Monoterpene synthase catalyzing the production of (-)-alpha-pinene, beta-phellandrene and beta-myrcene as the major products. Unable to use farnesyl diphosphate as substrate. Exclusively expressed in the fruit of wild strawberries. Not detected in cultivated varieties. The protein is (-)-alpha-pinene synthase of Fragaria vesca (Woodland strawberry).